Reading from the N-terminus, the 275-residue chain is NH(3)-dependent NAD(+) synthetase (275 aa).

46-53 contacts ATP; that stretch reads GISGGQDS. A Mg(2+)-binding site is contributed by Asp-52. Arg-140 lines the deamido-NAD(+) pocket. Thr-160 serves as a coordination point for ATP. Glu-165 is a binding site for Mg(2+). The deamido-NAD(+) site is built by Lys-173 and Asp-180. Positions 189 and 211 each coordinate ATP. 260 to 261 serves as a coordination point for deamido-NAD(+); the sequence is HK.

This sequence belongs to the NAD synthetase family. In terms of assembly, homodimer.

The enzyme catalyses deamido-NAD(+) + NH4(+) + ATP = AMP + diphosphate + NAD(+) + H(+). The protein operates within cofactor biosynthesis; NAD(+) biosynthesis; NAD(+) from deamido-NAD(+) (ammonia route): step 1/1. Functionally, catalyzes the ATP-dependent amidation of deamido-NAD to form NAD. Uses ammonia as a nitrogen source. This is NH(3)-dependent NAD(+) synthetase from Salmonella heidelberg (strain SL476).